The following is a 354-amino-acid chain: Gibberellin receptor GID1 (354 aa).

An Involved in the stabilization of the negatively charged intermediate by the formation of the oxyanion hole motif is present at residues 120-122; the sequence is HGG. Residues 122 to 123, tyrosine 134, serine 198, and aspartate 250 contribute to the gibberellin A3 site; that span reads GS. Gibberellin A4 is bound by residues 122–123, tyrosine 134, and serine 198; that span reads GS. Serine 198 is a catalytic residue. Aspartate 296 is a catalytic residue. Gibberellin A3 is bound at residue glycine 327. Glycine 327 is a gibberellin A4 binding site.

Belongs to the 'GDXG' lipolytic enzyme family. Interacts with the DELLA protein SLR1 in a GA-dependent manner, resulting in subsequent SLR1 degradation.

The protein localises to the nucleus. Functionally, functions as a soluble gibberellin (GA) receptor. GA is an essential hormone that regulates growth and development in plants. Binds with high affinity the biologically active GAs such as GA1, GA3 and GA4, but has low or no affinity for the biologically inactive GAs. Upon GA-binding, it interacts with the DELLA protein SLR1, a repressor of GA signaling. This leads to SLR1 degradation by the proteasome, allowing the GA signaling pathway. The chain is Gibberellin receptor GID1 from Oryza sativa subsp. japonica (Rice).